A 120-amino-acid chain; its full sequence is Large ribosomal subunit protein uL18 (120 aa).

The protein belongs to the universal ribosomal protein uL18 family. In terms of assembly, part of the 50S ribosomal subunit; part of the 5S rRNA/L5/L18/L25 subcomplex. Contacts the 5S and 23S rRNAs.

This is one of the proteins that bind and probably mediate the attachment of the 5S RNA into the large ribosomal subunit, where it forms part of the central protuberance. This is Large ribosomal subunit protein uL18 from Gluconacetobacter diazotrophicus (strain ATCC 49037 / DSM 5601 / CCUG 37298 / CIP 103539 / LMG 7603 / PAl5).